A 2623-amino-acid chain; its full sequence is Probable polyketide synthase 31 (2623 aa).

Low complexity predominate over residues methionine 1 to lysine 11. Residues methionine 1–asparagine 25 are disordered. The 435-residue stretch at aspartate 27 to glutamate 461 folds into the Ketosynthase family 3 (KS3) domain. Residues cysteine 199, histidine 338, and histidine 384 each act as for beta-ketoacyl synthase activity in the active site. The tract at residues glycine 666–tyrosine 699 is acyl/malonyl transferase. The active-site For acyl/malonyl transferase activity is serine 676. Residues histidine 959–serine 1088 are N-terminal hotdog fold. The region spanning histidine 959 to proline 1267 is the PKS/mFAS DH domain. Histidine 1000 serves as the catalytic Proton acceptor; for dehydratase activity. Residues asparagine 1105–proline 1267 are C-terminal hotdog fold. Aspartate 1177 acts as the Proton donor; for dehydratase activity in catalysis. Residues alanine 2524–lysine 2601 enclose the Carrier domain. At serine 2561 the chain carries O-(pantetheine 4'-phosphoryl)serine. The interval alanine 2600–asparagine 2623 is disordered. Positions lysine 2601–asparagine 2623 are enriched in low complexity.

The cofactor is pantetheine 4'-phosphate.

Functionally, probable polyketide synthase. The polypeptide is Probable polyketide synthase 31 (pks31) (Dictyostelium discoideum (Social amoeba)).